The sequence spans 519 residues: Ent-kaurene oxidase (519 aa).

Residues 1 to 10 (MDTLLSLQAV) are Chloroplast intermembrane-facing. The chain crosses the membrane as a helical span at residues 11-31 (PAAAAIGGPVVAIGGITLFFI). Residues 32–519 (REYVKDQRKK…PRLRDRVCVS (488 aa)) are Cytoplasmic-facing. Residue Cys458 coordinates heme.

This sequence belongs to the cytochrome P450 family. The cofactor is heme.

Its subcellular location is the plastid. The protein localises to the chloroplast outer membrane. It catalyses the reaction ent-kaur-16-ene + 3 reduced [NADPH--hemoprotein reductase] + 3 O2 = ent-kaur-16-en-19-oate + 3 oxidized [NADPH--hemoprotein reductase] + 4 H2O + 4 H(+). Its pathway is plant hormone biosynthesis; gibberellin biosynthesis. Its function is as follows. Catalyzes three successive oxidations of the 4-methyl group of ent-kaurene giving kaurenoic acid, a key step in gibberellins (GAs) biosynthesis. GAs, which are involved many processes, including stem elongation, play a central role in plant development. This is Ent-kaurene oxidase from Salvia miltiorrhiza (Chinese sage).